Here is a 148-residue protein sequence, read N- to C-terminus: Large ribosomal subunit protein uL15B (148 aa).

2 stretches are compositionally biased toward basic residues: residues 1 to 13 (MPTH…KLRG) and 21 to 31 (RIGKHRKHPGG). Residues 1–38 (MPTHTSKTRKLRGHVSAGHGRIGKHRKHPGGRGKAGGL) are disordered. Residue tyrosine 108 is modified to Phosphotyrosine.

The protein belongs to the universal ribosomal protein uL15 family. Component of the large ribosomal subunit (LSU). Mature yeast ribosomes consist of a small (40S) and a large (60S) subunit. The 40S small subunit contains 1 molecule of ribosomal RNA (18S rRNA) and at least 33 different proteins. The large 60S subunit contains 3 rRNA molecules (25S, 5.8S and 5S rRNA) and at least 46 different proteins.

The protein resides in the cytoplasm. It localises to the nucleus. The protein localises to the nucleolus. Component of the ribosome, a large ribonucleoprotein complex responsible for the synthesis of proteins in the cell. The small ribosomal subunit (SSU) binds messenger RNAs (mRNAs) and translates the encoded message by selecting cognate aminoacyl-transfer RNA (tRNA) molecules. The large subunit (LSU) contains the ribosomal catalytic site termed the peptidyl transferase center (PTC), which catalyzes the formation of peptide bonds, thereby polymerizing the amino acids delivered by tRNAs into a polypeptide chain. The nascent polypeptides leave the ribosome through a tunnel in the LSU and interact with protein factors that function in enzymatic processing, targeting, and the membrane insertion of nascent chains at the exit of the ribosomal tunnel. The chain is Large ribosomal subunit protein uL15B (rpl2801) from Schizosaccharomyces pombe (strain 972 / ATCC 24843) (Fission yeast).